The chain runs to 385 residues: MKDSFLFTSESVTEGHPDKMADQISDAVLDYIIERDQKAKVACETLVSNGFCMITGELKTSVYAPMQEIAREVVKKIGYTDALYGFDYRSAAVLNGVGEQSPDINQGVDREDGEIGAGDQGLMFGYACKETETLMPLPIHLAHQLTFALAQKRKDNTLPFLRPDGKSQVSVRYENNKPVSIDTIVISTQHSPEVSQKHLKEAVIEEIVYKILPKEYLHDNIKFFVNPTGKFVIGGPQGDAGLTGRKIIVDTYGGSCPHGGGAFSGKDPSKVDRSAAYAARYVAKNLVASGVCDKATVQLAYAIGVIEPVSIYVNTHNTSKYSSTELEKCVKSVFKLTPKGIIESLDLLRPIYSLTSAYGHFGRELEEFTWEKTNKAEEIKAFFKR.

H16 contacts ATP. D18 is a Mg(2+) binding site. Residue E44 coordinates K(+). L-methionine is bound by residues E57 and Q100. The tract at residues 100-110 is flexible loop; it reads QSPDINQGVDR. ATP-binding positions include 164 to 166, 230 to 231, D239, 245 to 246, A262, and K266; these read DGK, KF, and RK. D239 lines the L-methionine pocket. K270 is a binding site for L-methionine.

It belongs to the AdoMet synthase family. In terms of assembly, homotetramer; dimer of dimers. Mg(2+) is required as a cofactor. K(+) serves as cofactor.

The protein localises to the cytoplasm. It catalyses the reaction L-methionine + ATP + H2O = S-adenosyl-L-methionine + phosphate + diphosphate. The protein operates within amino-acid biosynthesis; S-adenosyl-L-methionine biosynthesis; S-adenosyl-L-methionine from L-methionine: step 1/1. In terms of biological role, catalyzes the formation of S-adenosylmethionine (AdoMet) from methionine and ATP. The overall synthetic reaction is composed of two sequential steps, AdoMet formation and the subsequent tripolyphosphate hydrolysis which occurs prior to release of AdoMet from the enzyme. The polypeptide is S-adenosylmethionine synthase (Helicobacter pylori (strain P12)).